The primary structure comprises 163 residues: S-ribosylhomocysteine lyase (163 aa).

Fe cation contacts are provided by histidine 54, histidine 58, and cysteine 128.

This sequence belongs to the LuxS family. In terms of assembly, homodimer. Fe cation is required as a cofactor.

The catalysed reaction is S-(5-deoxy-D-ribos-5-yl)-L-homocysteine = (S)-4,5-dihydroxypentane-2,3-dione + L-homocysteine. Functionally, involved in the synthesis of autoinducer 2 (AI-2) which is secreted by bacteria and is used to communicate both the cell density and the metabolic potential of the environment. The regulation of gene expression in response to changes in cell density is called quorum sensing. Catalyzes the transformation of S-ribosylhomocysteine (RHC) to homocysteine (HC) and 4,5-dihydroxy-2,3-pentadione (DPD). In Wolinella succinogenes (strain ATCC 29543 / DSM 1740 / CCUG 13145 / JCM 31913 / LMG 7466 / NCTC 11488 / FDC 602W) (Vibrio succinogenes), this protein is S-ribosylhomocysteine lyase.